The primary structure comprises 264 residues: MTTIHATAIVDSQAQLDSSVTVGPYSLIGPNVKVGAGTTIGPHCVIEGHTTIGRDNRIFQFSSLGAIPQDKKYAGEPCELVIGDRNTIREFCTFNIGSPGDLGVTRVGDDNWLMAYVHLAHDCVVGNKTIFANNSQLAGHVHVGDWAILGGFTVVHQFVKIGAHSMTALCTVLLADLPPFVMCQGQPAQARSMNYEGLRRRGFSPERIAVVKAMHKALYRESLTLQLARERIADLVKNSPESLPDVEMMLLFLEQTSPQRGIVR.

This sequence belongs to the transferase hexapeptide repeat family. LpxA subfamily. In terms of assembly, homotrimer.

The protein localises to the cytoplasm. The catalysed reaction is a (3R)-hydroxyacyl-[ACP] + UDP-N-acetyl-alpha-D-glucosamine = a UDP-3-O-[(3R)-3-hydroxyacyl]-N-acetyl-alpha-D-glucosamine + holo-[ACP]. The protein operates within glycolipid biosynthesis; lipid IV(A) biosynthesis; lipid IV(A) from (3R)-3-hydroxytetradecanoyl-[acyl-carrier-protein] and UDP-N-acetyl-alpha-D-glucosamine: step 1/6. Functionally, involved in the biosynthesis of lipid A, a phosphorylated glycolipid that anchors the lipopolysaccharide to the outer membrane of the cell. This chain is Acyl-[acyl-carrier-protein]--UDP-N-acetylglucosamine O-acyltransferase, found in Albidiferax ferrireducens (strain ATCC BAA-621 / DSM 15236 / T118) (Rhodoferax ferrireducens).